A 204-amino-acid polypeptide reads, in one-letter code: Auxin-binding protein 4 (204 aa).

A signal peptide spans Met-1 to Ser-41. Residues Cys-43 and Cys-196 are joined by a disulfide bond. The Zn(2+) site is built by His-98, His-100, and Glu-104. A glycan (N-linked (GlcNAc...) asparagine) is linked at Asn-136. Zn(2+) is bound at residue His-147. A Prevents secretion from ER motif is present at residues Lys-201 to Leu-204.

In terms of assembly, homodimer.

It localises to the endoplasmic reticulum lumen. This is probably a receptor for the plant hormone auxin. The chain is Auxin-binding protein 4 (ABP4) from Zea mays (Maize).